The primary structure comprises 229 residues: NAD-dependent protein deacetylase (229 aa).

Residues Met1 to Ile229 form the Deacetylase sirtuin-type domain. Ala20, Arg32, Gln96, Ile98, Asp99, His114, Thr181, Ser182, Asn205, and Val223 together coordinate NAD(+). Residues Ile98 and Asp99 each coordinate nicotinamide. The active-site Proton acceptor is the His114.

The protein belongs to the sirtuin family. Class U subfamily.

The protein localises to the cytoplasm. It catalyses the reaction N(6)-acetyl-L-lysyl-[protein] + NAD(+) + H2O = 2''-O-acetyl-ADP-D-ribose + nicotinamide + L-lysyl-[protein]. Its function is as follows. NAD-dependent protein deacetylase which modulates the activities of several enzymes which are inactive in their acetylated form. The protein is NAD-dependent protein deacetylase of Listeria monocytogenes serovar 1/2a (strain ATCC BAA-679 / EGD-e).